The sequence spans 79 residues: Small ribosomal subunit protein uS17 (79 aa).

It belongs to the universal ribosomal protein uS17 family. Part of the 30S ribosomal subunit.

One of the primary rRNA binding proteins, it binds specifically to the 5'-end of 16S ribosomal RNA. In Caulobacter sp. (strain K31), this protein is Small ribosomal subunit protein uS17.